The primary structure comprises 728 residues: Double-strand break repair protein mre-11 (728 aa).

The span at 1–12 (MCGSDDSFDDFV) shows a compositional bias: acidic residues. The disordered stretch occupies residues 1-45 (MCGSDDSFDDFVPDSQEPASSRTRNQDHLDDDEVPCSQRPDAAND). Residues Asp73, His75, Asp113, and Asn181 each coordinate Mn(2+). His182 serves as the catalytic Proton donor. The Mn(2+) site is built by His269, His301, and His303. The segment at 601-728 (KNPVADVEME…PSKKRDLSFF (128 aa)) is disordered. Residues 607-616 (VEMEEDEDDP) are compositionally biased toward acidic residues. Positions 622–632 (PQSTSRTNYAS) are enriched in polar residues. Acidic residues predominate over residues 634–645 (SEDEVANSDEEM).

Belongs to the MRE11/RAD32 family. As to quaternary structure, component of the MRN complex composed of two heterodimers rad-50 and mre-11 associated with a single nbs-1. Mn(2+) is required as a cofactor.

It is found in the nucleus. It localises to the chromosome. Functionally, core component of the MRN complex, which plays a central role in double-strand break (DSB) repair, DNA recombination, maintenance of telomere integrity and meiosis. The MRN complex is involved in the repair of DNA double-strand breaks (DSBs) via homologous recombination (HR), an error-free mechanism which primarily occurs during S and G2 phases. The complex (1) mediates the end resection of damaged DNA, which generates proper single-stranded DNA, a key initial steps in HR, and is (2) required for the recruitment of other repair factors and efficient activation of ATM and ATR upon DNA damage. Within the MRN complex, mre-11 possesses both single-strand endonuclease activity and double-strand-specific 3'-5' exonuclease activity. Mre-11 first endonucleolytically cleaves the 5' strand at DNA DSB ends to prevent non-homologous end joining (NHEJ) and licence HR. It then generates a single-stranded DNA gap via 3' to 5' exonucleolytic degradation, which is required for single-strand invasion and recombination. Required for meiotic crossing over and chiasma formation. Pachytene morphology and homolog pairing are normal. Vital in long term for maintenance of reproductive capacity of subsequent generations. The sequence is that of Double-strand break repair protein mre-11 from Caenorhabditis elegans.